The following is a 361-amino-acid chain: MGLKGYSVGEGGGEIVEVQGGHIIRATGRKDRHSKVFTSKGPRDRRVRLSAHTAIQFYDVQDRLGYDRPSKAVDWLIKKAKTAIDKLELGETTTTTTRQEPVNTKPESPTLVFQRENNDQTQFVAANLDPEDAMKTFFPATTTTNGGGGTNINFQNYPHQDDNNMVSRTTTPPPNLSQDLGLSLHPFQGNNNTVVVPETNNFTTTHFDTFGRISGWNHHDLTMTSSSSSEHQQQEQEERSNGGFMVNHHPHHHHHQPSMMTLLNSQQQQVFLGGQQQQQQRGTLQSSLFPHSFRSWDHHQTTSDHHHHQNQASSMFASSSQYGSHGMMMMQGLSFPNTTRLLHGEEATQPNSSSSPPNSHL.

The region spanning 29-87 (RKDRHSKVFTSKGPRDRRVRLSAHTAIQFYDVQDRLGYDRPSKAVDWLIKKAKTAIDKL) is the TCP domain. Disordered regions lie at residues 220–259 (DLTM…QPSM) and 295–317 (SWDH…SMFA). Residues 295–304 (SWDHHQTTSD) are compositionally biased toward basic and acidic residues.

As to quaternary structure, interacts with AHP1, AHP2 and AHP3. Interacts with SPL. In terms of tissue distribution, mostly detected in lateral organs, such as leaves and flowers. Expressed in cotyledons, particularly in the vascular region, in leaves, roots, stems, buds, flowers and immature siliques.

It localises to the nucleus. Functionally, plays a pivotal role in the control of morphogenesis of shoot organs by negatively regulating the expression of boundary-specific genes such as CUC genes, probably through the induction of miRNA (e.g. miR164). Participates in ovule development. The protein is Transcription factor TCP10 (TCP10) of Arabidopsis thaliana (Mouse-ear cress).